The primary structure comprises 348 residues: MKNTFNTSNAFASAYSFWGYVIGFLLSTSNRLYIGWFGILMFPLISLATVAYIAAFIFAPPVDIDGIREPVAGALLYGNNIISGAVIPSSNAIGVHFYPVWEALGFDEWLYNGGTYQFVVLHFIFGAGAWMGREWEFAFRLGMRPWIFVAFSAPLVASCAVFVVYPIGQGSFSDGMPLGISGTFNFMLVFQAEHNILMHPFHILGVAGVFGGSLFSAMHGSLVTSSLLAETAGDLSLNVGYNFGQEDETYSISAAHGYFGRLIFQYASFNNSRSLHFFLAAWPVIGIWFTALGVSTMAFNLNGLNFNQSIIDSSGHLINSWADIVNRADLGMEVMHERNAHNFPLDLA.

Helical transmembrane passes span 33–50 (YIGWFGILMFPLISLATV), 122–137 (HFIFGAGAWMGREWEF), and 146–160 (WIFVAFSAPLVASCA). His122 is a chlorophyll a binding site. Pheophytin a is bound at residue Trp130. [CaMn4O5] cluster contacts are provided by Asp174 and Glu193. Residues 201–222 (FHILGVAGVFGGSLFSAMHGSL) traverse the membrane as a helical segment. His202 contacts chlorophyll a. A quinone is bound by residues His219 and 268-269 (SF). A Fe cation-binding site is contributed by His219. Residue His276 coordinates Fe cation. Residues 278–292 (FLAAWPVIGIWFTAL) traverse the membrane as a helical segment. The [CaMn4O5] cluster site is built by His336, Glu337, Asp346, and Ala348.

The protein belongs to the reaction center PufL/M/PsbA/D family. As to quaternary structure, PSII is composed of 1 copy each of membrane proteins PsbA, PsbB, PsbC, PsbD, PsbE, PsbF, PsbH, PsbI, PsbJ, PsbK, PsbL, PsbM, PsbT, PsbX, PsbY, PsbZ, Psb30/Ycf12, at least 3 peripheral proteins of the oxygen-evolving complex and a large number of cofactors. It forms dimeric complexes. It depends on The D1/D2 heterodimer binds P680, chlorophylls that are the primary electron donor of PSII, and subsequent electron acceptors. It shares a non-heme iron and each subunit binds pheophytin, quinone, additional chlorophylls, carotenoids and lipids. D1 provides most of the ligands for the Mn4-Ca-O5 cluster of the oxygen-evolving complex (OEC). There is also a Cl(-1) ion associated with D1 and D2, which is required for oxygen evolution. The PSII complex binds additional chlorophylls, carotenoids and specific lipids. as a cofactor. Post-translationally, tyr-165 forms a radical intermediate that is referred to as redox-active TyrZ, YZ or Y-Z.

The protein localises to the plastid. Its subcellular location is the chloroplast thylakoid membrane. The enzyme catalyses 2 a plastoquinone + 4 hnu + 2 H2O = 2 a plastoquinol + O2. Functionally, photosystem II (PSII) is a light-driven water:plastoquinone oxidoreductase that uses light energy to abstract electrons from H(2)O, generating O(2) and a proton gradient subsequently used for ATP formation. It consists of a core antenna complex that captures photons, and an electron transfer chain that converts photonic excitation into a charge separation. The D1/D2 (PsbA/PsbD) reaction center heterodimer binds P680, the primary electron donor of PSII as well as several subsequent electron acceptors. This is Photosystem II protein D1 from Heterocapsa rotundata (Dinoflagellate).